A 176-amino-acid chain; its full sequence is Epididymal-specific lipocalin-9 (176 aa).

Residues 1–15 form the signal peptide; it reads MALLLLSLGLSLIAA. N-linked (GlcNAc...) asparagine glycosylation is found at N68 and N129. C83 and C161 are disulfide-bonded.

Belongs to the calycin superfamily. Lipocalin family.

It is found in the secreted. This is Epididymal-specific lipocalin-9 from Homo sapiens (Human).